We begin with the raw amino-acid sequence, 77 residues long: U8-lycotoxin-Ls1b (77 aa).

The signal sequence occupies residues 1-20 (MKLIIFTGLVLFAIVSLIEA). The propeptide occupies 21–26 (QAENEK).

Belongs to the neurotoxin 19 (CSTX) family. 08 (U8-Lctx) subfamily. Contains 4 disulfide bonds. As to expression, expressed by the venom gland.

The protein localises to the secreted. This is U8-lycotoxin-Ls1b from Lycosa singoriensis (Wolf spider).